The sequence spans 111 residues: Putative FAD-linked sulfhydryl oxidase 347L (111 aa).

The ERV/ALR sulfhydryl oxidase domain maps to 2 to 109 (TDIDPHIWGP…LPESVARKKW (108 aa)). C49 and C52 are joined by a disulfide.

It belongs to the IIV-6 347L family. Requires FAD as cofactor.

It carries out the reaction 2 R'C(R)SH + O2 = R'C(R)S-S(R)CR' + H2O2. Its function is as follows. FAD-dependent sulfhydryl oxidase that catalyzes disulfide bond formation. The polypeptide is Putative FAD-linked sulfhydryl oxidase 347L (Invertebrate iridescent virus 6 (IIV-6)).